The following is a 265-amino-acid chain: Keratinocyte-associated transmembrane protein 2 (265 aa).

An N-terminal signal peptide occupies residues 1 to 49; that stretch reads MAAAALKRMRGPAQAKLLPGSAIQALVGLARPLVLALLLVSAALSSVVS. Residues 50–196 are Extracellular-facing; that stretch reads RTDSPSPTVL…MPSSNIEEED (147 aa). The span at 72 to 96 shows a compositional bias: polar residues; that stretch reads THENQTKPSISQISTTLPPTMSTEK. Disordered regions lie at residues 72-123 and 135-168; these read THEN…EDPS and SPST…SDDT. N-linked (GlcNAc...) asparagine glycosylation is present at N75. Residues 114–123 show a composition bias toward acidic residues; sequence EEADNNEDPS. The helical transmembrane segment at 197–217 threads the bilayer; the sequence is SHFFFHLIIFAFCIAVVYITY. Topologically, residues 218 to 265 are cytoplasmic; the sequence is HNKRKIFLLVQSRKWRDGLCSKTVEYHRLDQNVNEAMPSLKITNDYTF. Residues S229 and S256 each carry the phosphoserine modification.

It localises to the membrane. The sequence is that of Keratinocyte-associated transmembrane protein 2 (KCT2) from Pongo abelii (Sumatran orangutan).